Consider the following 101-residue polypeptide: Small ribosomal subunit protein uS14 (101 aa).

The protein belongs to the universal ribosomal protein uS14 family. In terms of assembly, part of the 30S ribosomal subunit. Contacts proteins S3 and S10.

In terms of biological role, binds 16S rRNA, required for the assembly of 30S particles and may also be responsible for determining the conformation of the 16S rRNA at the A site. This is Small ribosomal subunit protein uS14 from Rhizobium etli (strain CIAT 652).